The primary structure comprises 156 residues: Small ribosomal subunit protein bS16 (156 aa).

A compositionally biased stretch (basic and acidic residues) spans 85 to 120 (GESGAEGTLKSKSEKEAFVAPERDSVILPEEPKQEE). Positions 85–156 (GESGAEGTLK…APAEDAEKSE (72 aa)) are disordered. Positions 132-150 (PAEEAAEAPAEEAAEAPAE) are enriched in acidic residues.

This sequence belongs to the bacterial ribosomal protein bS16 family.

This is Small ribosomal subunit protein bS16 from Micrococcus luteus (strain ATCC 4698 / DSM 20030 / JCM 1464 / CCM 169 / CCUG 5858 / IAM 1056 / NBRC 3333 / NCIMB 9278 / NCTC 2665 / VKM Ac-2230) (Micrococcus lysodeikticus).